The primary structure comprises 439 residues: Polygalacturonase QRT2 (439 aa).

Residues 1 to 21 form the signal peptide; the sequence is MYEKIIILSVFLLTFLPSCFS. Positions 43 to 69 are disordered; the sequence is RQHQHGHNTRNSHLKNRHGYAPRSSPR. Basic residues predominate over residues 44 to 62; the sequence is QHQHGHNTRNSHLKNRHGY. PbH1 repeat units lie at residues 201–250 and 251–272; these read CNNL…HVSG and TQNI…SIVS. Asp265 serves as the catalytic Proton donor. The active site involves His288. 2 PbH1 repeats span residues 304–325 and 333–354; these read VSNV…RIKT and AKNI…IINQ.

This sequence belongs to the glycosyl hydrolase 28 family. In terms of tissue distribution, expressed predominantly in roots with lower expression levels in rosette leaves, flower buds and siliques. Bearly detected in seeds. Found in flowers undergoing floral organ abscission. Also expressed early in anther development, at the time of microspore separation.

It localises to the secreted. Its subcellular location is the cell wall. It catalyses the reaction (1,4-alpha-D-galacturonosyl)n+m + H2O = (1,4-alpha-D-galacturonosyl)n + (1,4-alpha-D-galacturonosyl)m.. In terms of biological role, polygalacturonase required for cell type-specific pectin degradation to separate microspores. Involved in anther dehiscence and floral organ abscission. The polypeptide is Polygalacturonase QRT2 (QRT2) (Arabidopsis thaliana (Mouse-ear cress)).